The primary structure comprises 261 residues: Polyamine aminopropyltransferase (261 aa).

A PABS domain is found at 1-219; it reads MHPFRRRVRP…AVMAFRQSPS (219 aa). S-methyl-5'-thioadenosine is bound by residues D96 and 124-125; that span reads DG. Residue D142 is the Proton acceptor of the active site.

The protein belongs to the spermidine/spermine synthase family. As to quaternary structure, homodimer or homotetramer.

It localises to the cytoplasm. It carries out the reaction S-adenosyl 3-(methylsulfanyl)propylamine + putrescine = S-methyl-5'-thioadenosine + spermidine + H(+). The protein operates within amine and polyamine biosynthesis; spermidine biosynthesis; spermidine from putrescine: step 1/1. Catalyzes the irreversible transfer of a propylamine group from the amino donor S-adenosylmethioninamine (decarboxy-AdoMet) to putrescine (1,4-diaminobutane) to yield spermidine. This is Polyamine aminopropyltransferase from Chromobacterium violaceum (strain ATCC 12472 / DSM 30191 / JCM 1249 / CCUG 213 / NBRC 12614 / NCIMB 9131 / NCTC 9757 / MK).